A 226-amino-acid chain; its full sequence is PDGF-related-transforming protein sis (226 aa).

The span at 201–215 (RRPPKGKHRKCKHTH) shows a compositional bias: basic residues. The interval 201-226 (RRPPKGKHRKCKHTHDKTALKETLGA) is disordered.

Belongs to the PDGF/VEGF growth factor family.

This chain is PDGF-related-transforming protein sis (V-SIS), found in Woolly monkey sarcoma virus (WMSV).